A 391-amino-acid polypeptide reads, in one-letter code: MAAVTWSRARCWCPSLLQVLRLPVTKLHLGRPAMRATQQDFENAMNQVKLLKKDPGNEVKLRLYALYKQATEGPCTMPKPGVFDFVNKAKWDAWNALGSLPKETARQNYVDLVSSLSSSSEASSQGKGGADGKAQESKGILVTSEGGITKITFNRPSKKNAITFQMYQDIILALKNASTDDTVITVFTGAGDYYSSGNDLTNFTSASGGMEEAANKGAIVLREFVNTFIDFPKPLVAVVNGPAVGISVTLLGLFDAVYASDRATFHTPFSHLGQSPEACSSYTFPKMMGSAKAAEMLLFGKKLTAREAWAQGLVTEVFPESTFETEVWTRLKTYAKLPPNSMRISKELIRKNEKEKLHAVNEEECTTLRARWLSEECINAIMSFVTRKPKL.

The N-terminal 36 residues, 1–36 (MAAVTWSRARCWCPSLLQVLRLPVTKLHLGRPAMRA), are a transit peptide targeting the mitochondrion. The ACB domain maps to 37 to 122 (TQQDFENAMN…VSSLSSSSEA (86 aa)). Lys49 is subject to N6-acetyllysine; alternate. Lys49 bears the N6-succinyllysine; alternate mark. Lys53 bears the N6-succinyllysine mark. N6-acetyllysine; alternate is present on Lys60. Lys60 carries the post-translational modification N6-succinyllysine; alternate. 64–68 (YALYK) is a binding site for an acyl-CoA. 3 positions are modified to N6-succinyllysine: Lys68, Lys79, and Lys88. Residue Lys90 is modified to N6-acetyllysine; alternate. Lys90 carries the N6-succinyllysine; alternate modification. Lys90 contributes to the an acyl-CoA binding site. The residue at position 99 (Ser99) is a Phosphoserine. Tyr109 lines the an acyl-CoA pocket. Ser117 carries the post-translational modification Phosphoserine. N6-succinyllysine occurs at positions 127 and 159. Residues 149-319 (TKITFNRPSK…AQGLVTEVFP (171 aa)) are ECH-like. Residue 196 to 200 (SGNDL) participates in substrate binding. N6-succinyllysine is present on Lys286. The short motif at 389 to 391 (PKL) is the Microbody targeting signal element.

It in the C-terminal section; belongs to the enoyl-CoA hydratase/isomerase family. In terms of tissue distribution, liver (at protein level).

The protein resides in the peroxisome matrix. The protein localises to the mitochondrion. The enzyme catalyses a (3Z)-enoyl-CoA = a 4-saturated (2E)-enoyl-CoA. The catalysed reaction is a (3E)-enoyl-CoA = a 4-saturated (2E)-enoyl-CoA. It catalyses the reaction (2E)-tetradecenoyl-CoA = (3Z)-tetradecenoyl-CoA. It carries out the reaction (3E)-tetradecenoyl-CoA = (2E)-tetradecenoyl-CoA. The enzyme catalyses (3E)-octenoyl-CoA = (2E)-octenoyl-CoA. The catalysed reaction is (3Z)-octenoyl-CoA = (2E)-octenoyl-CoA. It catalyses the reaction (3E)-nonenoyl-CoA = (2E)-nonenoyl-CoA. It participates in lipid metabolism; fatty acid beta-oxidation. Able to isomerize both 3-cis and 3-trans double bonds into the 2-trans form in a range of enoyl-CoA species. Has a preference for 3-trans substrates. The sequence is that of Enoyl-CoA delta isomerase 2 from Rattus norvegicus (Rat).